Here is a 242-residue protein sequence, read N- to C-terminus: Biosynthetic peptidoglycan transglycosylase (242 aa).

The helical transmembrane segment at 19–39 threads the bilayer; that stretch reads LMVVLAIFWGGGIALFSVAPV.

This sequence belongs to the glycosyltransferase 51 family.

The protein resides in the cell inner membrane. The catalysed reaction is [GlcNAc-(1-&gt;4)-Mur2Ac(oyl-L-Ala-gamma-D-Glu-L-Lys-D-Ala-D-Ala)](n)-di-trans,octa-cis-undecaprenyl diphosphate + beta-D-GlcNAc-(1-&gt;4)-Mur2Ac(oyl-L-Ala-gamma-D-Glu-L-Lys-D-Ala-D-Ala)-di-trans,octa-cis-undecaprenyl diphosphate = [GlcNAc-(1-&gt;4)-Mur2Ac(oyl-L-Ala-gamma-D-Glu-L-Lys-D-Ala-D-Ala)](n+1)-di-trans,octa-cis-undecaprenyl diphosphate + di-trans,octa-cis-undecaprenyl diphosphate + H(+). It functions in the pathway cell wall biogenesis; peptidoglycan biosynthesis. Peptidoglycan polymerase that catalyzes glycan chain elongation from lipid-linked precursors. This chain is Biosynthetic peptidoglycan transglycosylase, found in Escherichia coli O127:H6 (strain E2348/69 / EPEC).